The sequence spans 232 residues: Ureidoacrylate amidohydrolase RutB (232 aa).

Aspartate 26 (proton acceptor) is an active-site residue. Lysine 135 is an active-site residue. The active-site Nucleophile is the cysteine 168.

It belongs to the isochorismatase family. RutB subfamily.

The catalysed reaction is (Z)-3-ureidoacrylate + H2O + H(+) = (Z)-3-aminoacrylate + NH4(+) + CO2. The enzyme catalyses (Z)-3-ureidoacrylate + H2O = (Z)-3-aminoacrylate + carbamate + H(+). It catalyses the reaction (Z)-2-methylureidoacrylate + H2O + H(+) = (Z)-2-methylaminoacrylate + NH4(+) + CO2. Functionally, hydrolyzes ureidoacrylate to form aminoacrylate and carbamate. The carbamate hydrolyzes spontaneously, thereby releasing one of the nitrogen atoms of the pyrimidine ring as ammonia and one of its carbon atoms as CO2. The polypeptide is Ureidoacrylate amidohydrolase RutB (Cronobacter sakazakii (strain ATCC BAA-894) (Enterobacter sakazakii)).